The primary structure comprises 88 residues: Small ribosomal subunit protein bS16 (88 aa).

This sequence belongs to the bacterial ribosomal protein bS16 family.

This is Small ribosomal subunit protein bS16 from Anaeromyxobacter dehalogenans (strain 2CP-1 / ATCC BAA-258).